Here is a 231-residue protein sequence, read N- to C-terminus: 5'-methylthioadenosine/S-adenosylhomocysteine nucleosidase (231 aa).

The active-site Proton acceptor is the E12. Substrate is bound by residues G78, V153, and 174-175 (ME). D198 serves as the catalytic Proton donor.

This sequence belongs to the PNP/UDP phosphorylase family. MtnN subfamily.

The enzyme catalyses S-adenosyl-L-homocysteine + H2O = S-(5-deoxy-D-ribos-5-yl)-L-homocysteine + adenine. It carries out the reaction S-methyl-5'-thioadenosine + H2O = 5-(methylsulfanyl)-D-ribose + adenine. The catalysed reaction is 5'-deoxyadenosine + H2O = 5-deoxy-D-ribose + adenine. Its pathway is amino-acid biosynthesis; L-methionine biosynthesis via salvage pathway; S-methyl-5-thio-alpha-D-ribose 1-phosphate from S-methyl-5'-thioadenosine (hydrolase route): step 1/2. Catalyzes the irreversible cleavage of the glycosidic bond in both 5'-methylthioadenosine (MTA) and S-adenosylhomocysteine (SAH/AdoHcy) to adenine and the corresponding thioribose, 5'-methylthioribose and S-ribosylhomocysteine, respectively. Also cleaves 5'-deoxyadenosine, a toxic by-product of radical S-adenosylmethionine (SAM) enzymes, into 5-deoxyribose and adenine. The chain is 5'-methylthioadenosine/S-adenosylhomocysteine nucleosidase from Aliivibrio fischeri (Vibrio fischeri).